Consider the following 217-residue polypeptide: NADPH-dependent 3-demethoxyubiquinone 3-hydroxylase, mitochondrial (217 aa).

2 consecutive repeat copies span residues 49-130 and 131-217. A 2 X approximate tandem repeats region spans residues 49 to 217; that stretch reads IIERIIRVDH…KTAIWLSTRV (169 aa). Residue arginine 52 participates in NADH binding. Fe cation contacts are provided by glutamate 61, glutamate 91, histidine 94, glutamate 143, glutamate 178, and histidine 181. Arginine 216 serves as a coordination point for NADH.

It belongs to the COQ7 family. Component of a multi-subunit COQ enzyme complex. Fe cation serves as cofactor.

It localises to the mitochondrion inner membrane. It carries out the reaction a 5-methoxy-2-methyl-3-(all-trans-polyprenyl)benzoquinone + NADH + O2 = a 3-demethylubiquinone + NAD(+) + H2O. The protein operates within cofactor biosynthesis; ubiquinone biosynthesis. In terms of biological role, catalyzes the hydroxylation of the 5-methoxy-2-methyl-3-(all-trans-polyprenyl)benzoquinone at the C6 position and participates in the biosynthesis of ubiquinone. Catalyzes the reaction through a substrate-mediated reduction pathway, whereby NADH shuttles electrons to 5-methoxy-2-methyl-3-(all-trans-decaprenyl)benzoquinone, which then transfers the electrons to the two Fe(3+) centers. The binding of 5-methoxy-2-methyl-3-(all-trans-polyprenyl)benzoquinone (DMQn) mediates reduction of the diiron center by nicotinamide adenine dinucleotide (NADH) and initiates oxygen activation for subsequent DMQ hydroxylation. Also has a structural role in the COQ enzyme complex, stabilizing other COQ polypeptides. The protein is NADPH-dependent 3-demethoxyubiquinone 3-hydroxylase, mitochondrial of Dictyostelium discoideum (Social amoeba).